A 167-amino-acid polypeptide reads, in one-letter code: Heme-degrading monooxygenase (167 aa).

The segment at 1–50 (MKKVFITTGTEHYLRQLMANYTGGNVTLLQNFSQSLLYQESTGEKLFQEG) is important for catalysis. The 88-residue stretch at 67 to 154 (VVVFEYIHLR…NNTQSGFSHE (88 aa)) folds into the ABM domain.

Belongs to the antibiotic biosynthesis monooxygenase family. As to quaternary structure, monomer.

It localises to the cytoplasm. Functionally, catalyzes the degradation of heme to biliverdin in the presence of a suitable electron donor such as ascorbate, with the subsequent release of iron. Hardly any CO is released by the heme degradation reaction. Binds heme. Allows bacterial pathogens to use the host heme as an iron source. Release of iron from heme may play a crucial role in the pathogenicity of L.monocytogenes. The chain is Heme-degrading monooxygenase from Listeria monocytogenes serovar 1/2a (strain ATCC BAA-679 / EGD-e).